The chain runs to 186 residues: MNRFIKSATSLKDCINDSKKEVCLIGRSNVGKSTIINGLANAKIAQTSKTPGRTVTMNFYEISNQRIVDLPGYGYARIKKSQKEEISLFLSDYLNHRKNLVGIFLILDLGVITDQDIEIVRLLTTLDVEYYIVFNKIDKYPKSAYINNKEKILDALKVNEDRILLISAKNKQNLNNLMLKIIDVIS.

Positions 18 to 186 constitute an EngB-type G domain; the sequence is SKKEVCLIGR…LMLKIIDVIS (169 aa). GTP is bound by residues 26-33, 52-56, 69-72, 135-138, and 166-168; these read GRSNVGKS, GRTVT, DLPG, NKID, and ISA. The Mg(2+) site is built by serine 33 and threonine 54.

This sequence belongs to the TRAFAC class TrmE-Era-EngA-EngB-Septin-like GTPase superfamily. EngB GTPase family. Mg(2+) is required as a cofactor.

Its function is as follows. Necessary for normal cell division and for the maintenance of normal septation. The sequence is that of Probable GTP-binding protein EngB from Mycoplasmoides gallisepticum (strain R(low / passage 15 / clone 2)) (Mycoplasma gallisepticum).